Reading from the N-terminus, the 883-residue chain is Valine--tRNA ligase (883 aa).

Positions 46 to 56 (PNVTGKLHLGH) match the 'HIGH' region motif. Positions 520-524 (KMSKS) match the 'KMSKS' region motif. An ATP-binding site is contributed by Lys523. Residues 809-844 (LADLLNVEEELARLEKELAKWQKELDMVGKKLSNER) are a coiled coil.

This sequence belongs to the class-I aminoacyl-tRNA synthetase family. ValS type 1 subfamily. As to quaternary structure, monomer.

It localises to the cytoplasm. It catalyses the reaction tRNA(Val) + L-valine + ATP = L-valyl-tRNA(Val) + AMP + diphosphate. Catalyzes the attachment of valine to tRNA(Val). As ValRS can inadvertently accommodate and process structurally similar amino acids such as threonine, to avoid such errors, it has a 'posttransfer' editing activity that hydrolyzes mischarged Thr-tRNA(Val) in a tRNA-dependent manner. This is Valine--tRNA ligase from Streptococcus agalactiae serotype V (strain ATCC BAA-611 / 2603 V/R).